An 869-amino-acid chain; its full sequence is MSSIARPPDPCLVAIILIVRSRAGPRFVFHYPPNPLSENGLRGAPKARRPSRKNSKSNESSSSEDSSSTSSEDEDEAPITATAAAPATTGTATQPANATQNASHVAGSHPVAGRRSSNFGVVDDTTISGSPGGESQRAGSVGSGRGLMMRKRGTNSDAEEDAGAASDRQEDEAGPFRPPWESLLGLPADVWEKLLSPSRSWHKRRFEVGINDLAFVGWPVFVREDGTWRKQRRKKRKPRATWEGGELGHNETPGDGDGDGEGDEAGTEDDSPDRGTELIAASTETLSPKQMATTDSQRASMISVRSFRTLSEALDPDDKDCMTMFNVVFVLDPPLLEYSMRLREIYDNIIKKFSKALKWEQARTDYVWKEAQHISHIKEKAKEKRMSVNSLYSELISQSSLARAICTVFTSISASKIASVSLSPDVSISLQIPPLTSTPWLPGPTDKAYPGLWLTTADSVTPVDDPTADENTAPHQVLAKHFALLLLDNEASILKDVEASGGALAPALAHYIRCSKPTKSFAQISVSSGIPLSTIQMLASHLVYWRRARAIPPLHQRDTYIVSPNCDLSKLEVATAAYQAAFPTLPSLPKMLSAMSGTPRPYGSFIPSKDHKDTYFAILAWLLRGGWVTQLRAFARVKISPEIKMAVETALRQEEVDKYLSKRGSASDTEIREDLDDASSSSSSSLGSNGSGDETPMPGRYKRNNELDLSHSLLDQNTSLKTSSLILYPHRASPLESRWLGEVMARFPELQGDVPDGDLEYAGLRTSLKKYWPTFIKYFNGYDALEKIPVRESLKRKLVWQILMRLGLVTGQQSSIQLDPREQILKTVQFFTKTIHNFEINKTISPNPASSHVMTPRHTDGRNGTTPTN.

The signal sequence occupies residues 1–23; sequence MSSIARPPDPCLVAIILIVRSRA. Disordered stretches follow at residues 31–180, 228–275, 662–702, and 842–869; these read YPPN…RPPW, WRKQ…PDRG, KRGS…GRYK, and KTIS…TPTN. Positions 45-55 are enriched in basic residues; it reads PKARRPSRKNS. 2 stretches are compositionally biased toward low complexity: residues 57–70 and 80–102; these read SNES…SSTS and TATA…TQNA. A compositionally biased stretch (polar residues) spans 115–129; that stretch reads RSSNFGVVDDTTISG. The segment covering 229–239 has biased composition (basic residues); sequence RKQRRKKRKPR. A compositionally biased stretch (acidic residues) spans 254-271; sequence GDGDGDGEGDEAGTEDDS. The segment covering 679-692 has biased composition (low complexity); the sequence is SSSSSSSLGSNGSG. Residues 842–853 show a composition bias toward polar residues; the sequence is KTISPNPASSHV.

This sequence belongs to the NPR3 family.

Mediates inactivation of the TORC1 complex in response to amino acid starvation. Required for meiotic nuclear division. This chain is Nitrogen permease regulator 3 (npr3), found in Aspergillus niger (strain ATCC MYA-4892 / CBS 513.88 / FGSC A1513).